A 497-amino-acid polypeptide reads, in one-letter code: POU domain, class 3, transcription factor 3 (497 aa).

Residues 31–51 show a composition bias toward gly residues; sequence GGGGGGGGGGGGAGGGGGGMQ. 4 disordered regions span residues 31-62, 121-189, 230-316, and 458-497; these read GGGG…SGAY, WSGS…WGAA, NGML…TPTS, and EKRM…TSVQ. Composition is skewed to pro residues over residues 133–145 and 170–180; these read QQPP…PPQG and HLGPPPPPPHQ. A compositionally biased stretch (gly residues) spans 240–250; sequence GGGGGGAGGGA. Basic residues predominate over residues 269–286; that stretch reads HHHHHHHHAHPHPPHPHH. The region spanning 311-385 is the POU-specific domain; the sequence is EDTPTSDDLE…LLNKWLEEAD (75 aa). A DNA-binding region (homeobox) is located at residues 403–462; that stretch reads KRKKRTSIEVSVKGALESHFLKCPKPSAQEITNLADSLQLEKEVVRVWFCNRRQKEKRMT. Residues 465 to 483 show a composition bias toward polar residues; that stretch reads GIQQQTPDDVYSQVGTVSA.

The protein belongs to the POU transcription factor family. Class-3 subfamily. In terms of assembly, homodimer. Brain.

It localises to the nucleus. Transcription factor that acts synergistically with SOX11 and SOX4. Plays a role in neuronal development. Is implicated in an enhancer activity at the embryonic met-mesencephalic junction; the enhancer element contains the octamer motif (5'-ATTTGCAT-3'). This Rattus norvegicus (Rat) protein is POU domain, class 3, transcription factor 3 (Pou3f3).